Here is a 668-residue protein sequence, read N- to C-terminus: UvrABC system protein B (668 aa).

The Helicase ATP-binding domain occupies 25 to 413; that stretch reads NGINTGLQHQ…QNTVQQVIRP (389 aa). Residue 38–45 participates in ATP binding; it reads GVTGSGKT. Residues 91 to 114 carry the Beta-hairpin motif; the sequence is YYDYYQPEAYIAASDTYIEKDSSV. Residues 429–595 enclose the Helicase C-terminal domain; that stretch reads QVEDALSEIN…TIIKNIDDML (167 aa). Residues 629-664 enclose the UVR domain; that stretch reads TKVIKALEKRMRAYAKELEFEKATTIRDKITEVKQK.

Belongs to the UvrB family. In terms of assembly, forms a heterotetramer with UvrA during the search for lesions. Interacts with UvrC in an incision complex.

The protein resides in the cytoplasm. The UvrABC repair system catalyzes the recognition and processing of DNA lesions. A damage recognition complex composed of 2 UvrA and 2 UvrB subunits scans DNA for abnormalities. Upon binding of the UvrA(2)B(2) complex to a putative damaged site, the DNA wraps around one UvrB monomer. DNA wrap is dependent on ATP binding by UvrB and probably causes local melting of the DNA helix, facilitating insertion of UvrB beta-hairpin between the DNA strands. Then UvrB probes one DNA strand for the presence of a lesion. If a lesion is found the UvrA subunits dissociate and the UvrB-DNA preincision complex is formed. This complex is subsequently bound by UvrC and the second UvrB is released. If no lesion is found, the DNA wraps around the other UvrB subunit that will check the other stand for damage. The sequence is that of UvrABC system protein B from Francisella tularensis subsp. tularensis (strain SCHU S4 / Schu 4).